The chain runs to 98 residues: NADH-ubiquinone oxidoreductase chain 4L (98 aa).

Transmembrane regions (helical) follow at residues 1–21, 29–49, and 61–81; these read MSLVHINILMAFIMSLTGLLM, ALLCLEGMMLSLFVLATLTIL, and IILLVFAACEAAIGLALLVMI.

The protein belongs to the complex I subunit 4L family. Core subunit of respiratory chain NADH dehydrogenase (Complex I) which is composed of 45 different subunits.

Its subcellular location is the mitochondrion inner membrane. It catalyses the reaction a ubiquinone + NADH + 5 H(+)(in) = a ubiquinol + NAD(+) + 4 H(+)(out). Core subunit of the mitochondrial membrane respiratory chain NADH dehydrogenase (Complex I) which catalyzes electron transfer from NADH through the respiratory chain, using ubiquinone as an electron acceptor. Part of the enzyme membrane arm which is embedded in the lipid bilayer and involved in proton translocation. This is NADH-ubiquinone oxidoreductase chain 4L (MT-ND4L) from Delphinapterus leucas (Beluga whale).